Reading from the N-terminus, the 188-residue chain is Adenine phosphoribosyltransferase (188 aa).

AMP is bound at residue 134-138 (ATGGS).

This sequence belongs to the purine/pyrimidine phosphoribosyltransferase family. In terms of assembly, homodimer. Mg(2+) is required as a cofactor.

Its subcellular location is the cytoplasm. It is found in the nucleus. It catalyses the reaction AMP + diphosphate = 5-phospho-alpha-D-ribose 1-diphosphate + adenine. The protein operates within purine metabolism; AMP biosynthesis via salvage pathway; AMP from adenine: step 1/1. In terms of biological role, catalyzes a salvage reaction resulting in the formation of AMP, that is energically less costly than de novo synthesis. The polypeptide is Adenine phosphoribosyltransferase (APT1) (Candida albicans (strain SC5314 / ATCC MYA-2876) (Yeast)).